Here is a 238-residue protein sequence, read N- to C-terminus: Orotidine 5'-phosphate decarboxylase (238 aa).

Residues aspartate 10, lysine 32, 59-68, threonine 122, arginine 184, glutamine 193, glycine 213, and arginine 214 each bind substrate; that span reads DLKLHDIPNT. The active-site Proton donor is the lysine 61.

It belongs to the OMP decarboxylase family. Type 1 subfamily. In terms of assembly, homodimer.

It catalyses the reaction orotidine 5'-phosphate + H(+) = UMP + CO2. The protein operates within pyrimidine metabolism; UMP biosynthesis via de novo pathway; UMP from orotate: step 2/2. In terms of biological role, catalyzes the decarboxylation of orotidine 5'-monophosphate (OMP) to uridine 5'-monophosphate (UMP). In Bacillus cereus (strain G9842), this protein is Orotidine 5'-phosphate decarboxylase.